A 326-amino-acid chain; its full sequence is Beta-ketoacyl-[acyl-carrier-protein] synthase III (326 aa).

Catalysis depends on residues Cys-120 and His-253. The segment at 254 to 258 is ACP-binding; the sequence is QANIR. The active site involves Asn-283.

The protein belongs to the thiolase-like superfamily. FabH family. Homodimer.

The protein localises to the cytoplasm. It catalyses the reaction malonyl-[ACP] + acetyl-CoA + H(+) = 3-oxobutanoyl-[ACP] + CO2 + CoA. Its pathway is lipid metabolism; fatty acid biosynthesis. Catalyzes the condensation reaction of fatty acid synthesis by the addition to an acyl acceptor of two carbons from malonyl-ACP. Catalyzes the first condensation reaction which initiates fatty acid synthesis and may therefore play a role in governing the total rate of fatty acid production. Possesses both acetoacetyl-ACP synthase and acetyl transacylase activities. Its substrate specificity determines the biosynthesis of branched-chain and/or straight-chain of fatty acids. This is Beta-ketoacyl-[acyl-carrier-protein] synthase III from Cupriavidus pinatubonensis (strain JMP 134 / LMG 1197) (Cupriavidus necator (strain JMP 134)).